A 345-amino-acid chain; its full sequence is Phosphoribosylformylglycinamidine cyclo-ligase (345 aa).

The protein belongs to the AIR synthase family.

Its subcellular location is the cytoplasm. It carries out the reaction 2-formamido-N(1)-(5-O-phospho-beta-D-ribosyl)acetamidine + ATP = 5-amino-1-(5-phospho-beta-D-ribosyl)imidazole + ADP + phosphate + H(+). The protein operates within purine metabolism; IMP biosynthesis via de novo pathway; 5-amino-1-(5-phospho-D-ribosyl)imidazole from N(2)-formyl-N(1)-(5-phospho-D-ribosyl)glycinamide: step 2/2. This chain is Phosphoribosylformylglycinamidine cyclo-ligase, found in Escherichia coli O45:K1 (strain S88 / ExPEC).